The primary structure comprises 387 residues: tRNA pseudouridine synthase B (387 aa).

D43 serves as the catalytic Nucleophile.

Belongs to the pseudouridine synthase TruB family. Type 1 subfamily.

It carries out the reaction uridine(55) in tRNA = pseudouridine(55) in tRNA. Responsible for synthesis of pseudouridine from uracil-55 in the psi GC loop of transfer RNAs. This Bifidobacterium longum (strain NCC 2705) protein is tRNA pseudouridine synthase B.